Here is a 180-residue protein sequence, read N- to C-terminus: Large ribosomal subunit protein uL18m (180 aa).

Belongs to the universal ribosomal protein uL18 family. Component of the mitochondrial ribosome large subunit (39S) which comprises a 16S rRNA and about 50 distinct proteins.

The protein resides in the mitochondrion. Together with thiosulfate sulfurtransferase (TST), acts as a mitochondrial import factor for the cytosolic 5S rRNA. The precursor form shows RNA chaperone activity; is able to fold the 5S rRNA into an import-competent conformation that is recognized by rhodanese (TST). Both the cytoplasmic and mitochondrial forms are able to bind to the helix IV-loop D in the gamma domain of the 5S rRNA. This is Large ribosomal subunit protein uL18m (Mrpl18) from Mus musculus (Mouse).